The chain runs to 292 residues: Inhibitory synaptic factor 1 (292 aa).

Disordered regions lie at residues 1-25 (MNIRGTPDLGQPSDDPSSGGERERI), 122-186 (SDSV…ERVR), and 198-292 (CDDE…KGKN). The stretch at 23-63 (ERIRQRMKMVIGQLEDILRELKEVAKELREVVSQIDKLTSD) forms a coiled coil. Acidic residues predominate over residues 198-214 (CDDEEGDGEEEAAEEEG). Residues 263–285 (RNSSTQTVSDKSTQTVLPYTATR) show a composition bias toward polar residues.

It belongs to the INSYN1 family. Interacts with GPHN.

It is found in the postsynaptic density. Component of the protein machinery at the inhibitory synapses, probably acting as a scaffold. Inhibitory synapses dampen neuronal activity through postsynaptic hyperpolarization. This synaptic inhibition is fundamental for the functioning of the central nervous system, shaping and orchestrating the flow of information through neuronal networks to generate a precise neural code. The chain is Inhibitory synaptic factor 1 from Bos taurus (Bovine).